The sequence spans 213 residues: Glutathione S-transferase (213 aa).

The GST N-terminal domain maps to 4–81 (AKPILYGAWI…YLEDKYPQHP (78 aa)). In terms of domain architecture, GST C-terminal spans 86 to 211 (DIKTKGLDLQ…LPQNQPDAPS (126 aa)).

It belongs to the GST superfamily. Zeta family.

The protein localises to the cytoplasm. The catalysed reaction is RX + glutathione = an S-substituted glutathione + a halide anion + H(+). Functionally, has a glutathione transferase activity with ethacrynic acid and nitrophenyl acetate. Has low glutathione peroxidase activity with cumene hydroperoxide. The chain is Glutathione S-transferase (GSTZ1) from Triticum aestivum (Wheat).